The sequence spans 205 residues: Interleukin-6 (205 aa).

The signal sequence occupies residues 1-21; sequence RFTSAFSLGLLLVTATAFPTP. Cysteine 64 and cysteine 70 are disulfide-bonded. Serine 73 is subject to Phosphoserine. The cysteines at positions 93 and 103 are disulfide-linked. Asparagine 164 carries an N-linked (GlcNAc...) asparagine glycan.

This sequence belongs to the IL-6 superfamily. In terms of assembly, component of a hexamer of two molecules each of IL6, IL6R and IL6ST; first binds to IL6R to associate with the signaling subunit IL6ST. Interacts with IL6R (via the N-terminal ectodomain); this interaction may be affected by IL6R-binding with SORL1, hence decreasing IL6 cis signaling. Interacts with SORL1 (via the N-terminal ectodomain); this interaction leads to IL6 internalization and lysosomal degradation. May form a trimeric complex with the soluble SORL1 ectodomain and soluble IL6R receptor; this interaction might stabilize circulating IL6, hence promoting IL6 trans signaling.

It is found in the secreted. Its function is as follows. Cytokine with a wide variety of biological functions in immunity, tissue regeneration, and metabolism. Binds to IL6R, then the complex associates to the signaling subunit IL6ST/gp130 to trigger the intracellular IL6-signaling pathway. The interaction with the membrane-bound IL6R and IL6ST stimulates 'classic signaling', whereas the binding of IL6 and soluble IL6R to IL6ST stimulates 'trans-signaling'. Alternatively, 'cluster signaling' occurs when membrane-bound IL6:IL6R complexes on transmitter cells activate IL6ST receptors on neighboring receiver cells. Functionally, IL6 is a potent inducer of the acute phase response. Rapid production of IL6 contributes to host defense during infection and tissue injury, but excessive IL6 synthesis is involved in disease pathology. In the innate immune response, is synthesized by myeloid cells, such as macrophages and dendritic cells, upon recognition of pathogens through toll-like receptors (TLRs) at the site of infection or tissue injury. In the adaptive immune response, is required for the differentiation of B cells into immunoglobulin-secreting cells. Plays a major role in the differentiation of CD4(+) T cell subsets. Essential factor for the development of T follicular helper (Tfh) cells that are required for the induction of germinal-center formation. Required to drive naive CD4(+) T cells to the Th17 lineage. Also required for proliferation of myeloma cells and the survival of plasmablast cells. Acts as an essential factor in bone homeostasis and on vessels directly or indirectly by induction of VEGF, resulting in increased angiogenesis activity and vascular permeability. Induces, through 'trans-signaling' and synergistically with IL1B and TNF, the production of VEGF. Involved in metabolic controls, is discharged into the bloodstream after muscle contraction increasing lipolysis and improving insulin resistance. 'Trans-signaling' in central nervous system also regulates energy and glucose homeostasis. Mediates, through GLP-1, crosstalk between insulin-sensitive tissues, intestinal L cells and pancreatic islets to adapt to changes in insulin demand. Also acts as a myokine. Plays a protective role during liver injury, being required for maintenance of tissue regeneration. Also has a pivotal role in iron metabolism by regulating HAMP/hepcidin expression upon inflammation or bacterial infection. Through activation of IL6ST-YAP-NOTCH pathway, induces inflammation-induced epithelial regeneration. The sequence is that of Interleukin-6 (IL6) from Orcinus orca (Killer whale).